The chain runs to 294 residues: MSSFAIFGNPVSHSKSPKIYSMFANEFGMCGEYDLKVASDDNFYNLLYQFFDMGGFGANITVPFKKRAFLLCDNLTDRSILSSTVNTIKKQLDGTLLGDNTDGIGLINDLKRLNWISIDNAFIDMTCNNIQETANILLIGSGGAAQSIIPVLLDIKKCCVNIINRTFFNAQRLVQYYHSIGRQNISCIDLNNLLCEKNACKKYDLIINASSSSMNNDLPCISSFLITPFTKCYDLFYGNQDTIFVKWCKKNGSNYCVDGLGMLIEQAAYAFYLWHGKKPSVPIVLNAFRSELCK.

Shikimate contacts are provided by residues 14-16 (SKS) and T61. The active-site Proton acceptor is the K65. Residue D77 participates in NADP(+) binding. Shikimate is bound by residues N86 and D102. Residues 140-144 (GSGGA) and L235 each bind NADP(+). Y237 is a shikimate binding site. G259 serves as a coordination point for NADP(+).

This sequence belongs to the shikimate dehydrogenase family. Homodimer.

It catalyses the reaction shikimate + NADP(+) = 3-dehydroshikimate + NADPH + H(+). It functions in the pathway metabolic intermediate biosynthesis; chorismate biosynthesis; chorismate from D-erythrose 4-phosphate and phosphoenolpyruvate: step 4/7. In terms of biological role, involved in the biosynthesis of the chorismate, which leads to the biosynthesis of aromatic amino acids. Catalyzes the reversible NADPH linked reduction of 3-dehydroshikimate (DHSA) to yield shikimate (SA). In Blochmanniella floridana, this protein is Shikimate dehydrogenase (NADP(+)).